The sequence spans 158 residues: Acetolactate synthase small subunit (158 aa).

The ACT domain maps to 4–79 (MIIAKLHNVT…DVIEVADITD (76 aa)).

It belongs to the acetolactate synthase small subunit family. Dimer of large and small chains.

The catalysed reaction is 2 pyruvate + H(+) = (2S)-2-acetolactate + CO2. Its pathway is amino-acid biosynthesis; L-isoleucine biosynthesis; L-isoleucine from 2-oxobutanoate: step 1/4. It participates in amino-acid biosynthesis; L-valine biosynthesis; L-valine from pyruvate: step 1/4. The sequence is that of Acetolactate synthase small subunit (ilvH) from Lactococcus lactis subsp. lactis (strain IL1403) (Streptococcus lactis).